Consider the following 261-residue polypeptide: 3-hydroxyacyl-CoA dehydrogenase type-2 (261 aa).

At A2 the chain carries N-acetylalanine. NAD(+) contacts are provided by S20, L22, and D41. Residue K53 is modified to N6-acetyllysine; alternate. K53 is subject to N6-succinyllysine; alternate. NAD(+) contacts are provided by D64 and V65. K69 bears the N6-acetyllysine mark. C91 is an NAD(+) binding site. Residues K99 and K105 each carry the N6-acetyllysine modification. S155 contacts substrate. NAD(+) is bound by residues Y168, K172, F201, and T203. The active-site Proton acceptor is Y168. K212 is subject to N6-acetyllysine; alternate. K212 carries the post-translational modification N6-succinyllysine; alternate.

It belongs to the short-chain dehydrogenases/reductases (SDR) family. As to quaternary structure, homotetramer. Component of mitochondrial ribonuclease P, a complex composed of TRMT10C/MRPP1, HSD17B10/MRPP2 and PRORP/MRPP3. Interacts with TRMT10C/MRPP1; forming the MRPP1-MRPP2 subcomplex of the mitochondrial ribonuclease P complex.

It is found in the mitochondrion. The protein localises to the mitochondrion matrix. The protein resides in the mitochondrion nucleoid. It carries out the reaction a (3S)-3-hydroxyacyl-CoA + NAD(+) = a 3-oxoacyl-CoA + NADH + H(+). The catalysed reaction is (2S,3S)-3-hydroxy-2-methylbutanoyl-CoA + NAD(+) = 2-methyl-3-oxobutanoyl-CoA + NADH + H(+). The enzyme catalyses testosterone + NAD(+) = androst-4-ene-3,17-dione + NADH + H(+). It catalyses the reaction 5alpha-androstane-3alpha,17beta-diol + NAD(+) = 17beta-hydroxy-5alpha-androstan-3-one + NADH + H(+). It carries out the reaction 17beta-estradiol + NAD(+) = estrone + NADH + H(+). The catalysed reaction is cholate + NAD(+) = 3alpha,12alpha-dihydroxy-7-oxo-5beta-cholanate + NADH + H(+). The enzyme catalyses (3S)-3-hydroxybutanoyl-CoA + NAD(+) = acetoacetyl-CoA + NADH + H(+). It catalyses the reaction (3S)-hydroxyoctanoyl-CoA + NAD(+) = 3-oxooctanoyl-CoA + NADH + H(+). It carries out the reaction (3S)-hydroxyhexadecanoyl-CoA + NAD(+) = 3-oxohexadecanoyl-CoA + NADH + H(+). The catalysed reaction is 17beta-hydroxy-5alpha-androstan-3-one + NAD(+) = 5alpha-androstan-3,17-dione + NADH + H(+). The enzyme catalyses 5alpha-pregnan-20beta-ol-3-one + NAD(+) = 5alpha-pregnane-3,20-dione + NADH + H(+). It catalyses the reaction 3alpha-hydroxy-5alpha-pregnan-20-one + NAD(+) = 5alpha-pregnane-3,20-dione + NADH + H(+). It carries out the reaction cortisone + NAD(+) = 17alpha-hydroxypregn-4-en-3,11,20-trione-21-al + NADH + H(+). The catalysed reaction is 11-dehydrocorticosterone + NAD(+) = pregn-4-ene-3,11,20,21-tetraone + NADH + H(+). The enzyme catalyses cortisol + NAD(+) = 11beta,17alpha-dihydroxypregn-4-ene-3,20,21-trione + NADH + H(+). It catalyses the reaction chenodeoxycholate + NAD(+) = 7-oxolithocholate + NADH + H(+). It carries out the reaction ursodeoxycholate + NAD(+) = 7-oxolithocholate + NADH + H(+). The catalysed reaction is 3beta,7beta-dihydroxy-5beta-cholan-24-oate + NAD(+) = 3beta-hydroxy-7-oxo-5beta-cholan-24-oate + NADH + H(+). Its pathway is amino-acid degradation; L-isoleucine degradation. It participates in lipid metabolism; fatty acid beta-oxidation. It functions in the pathway steroid metabolism. The protein operates within lipid metabolism; bile acid biosynthesis. Functionally, mitochondrial dehydrogenase involved in pathways of fatty acid, branched-chain amino acid and steroid metabolism. Acts as (S)-3-hydroxyacyl-CoA dehydrogenase in mitochondrial fatty acid beta-oxidation, a major degradation pathway of fatty acids. Catalyzes the third step in the beta-oxidation cycle, namely the reversible conversion of (S)-3-hydroxyacyl-CoA to 3-ketoacyl-CoA. Preferentially accepts straight medium- and short-chain acyl-CoA substrates with highest efficiency for (3S)-hydroxybutanoyl-CoA. Acts as 3-hydroxy-2-methylbutyryl-CoA dehydrogenase in branched-chain amino acid catabolic pathway. Catalyzes the oxidation of 3-hydroxy-2-methylbutanoyl-CoA into 2-methyl-3-oxobutanoyl-CoA, a step in isoleucine degradation pathway. Has hydroxysteroid dehydrogenase activity toward steroid hormones and bile acids. Catalyzes the oxidation of 3alpha-, 17beta-, 20beta- and 21-hydroxysteroids and 7alpha- and 7beta-hydroxy bile acids. Oxidizes allopregnanolone/brexanolone at the 3alpha-hydroxyl group, which is known to be critical for the activation of gamma-aminobutyric acid receptors (GABAARs) chloride channel. Has phospholipase C-like activity toward cardiolipin and its oxidized species. Likely oxidizes the 2'-hydroxyl in the head group of cardiolipin to form a ketone intermediate that undergoes nucleophilic attack by water and fragments into diacylglycerol, dihydroxyacetone and orthophosphate. Has higher affinity for cardiolipin with oxidized fatty acids and may degrade these species during the oxidative stress response to protect cells from apoptosis. By interacting with intracellular amyloid-beta, it may contribute to the neuronal dysfunction associated with Alzheimer disease (AD). Essential for structural and functional integrity of mitochondria. In terms of biological role, in addition to mitochondrial dehydrogenase activity, moonlights as a component of mitochondrial ribonuclease P, a complex that cleaves tRNA molecules in their 5'-ends. Together with TRMT10C/MRPP1, forms a subcomplex of the mitochondrial ribonuclease P, named MRPP1-MRPP2 subcomplex, which displays functions that are independent of the ribonuclease P activity. The MRPP1-MRPP2 subcomplex catalyzes the formation of N(1)-methylguanine and N(1)-methyladenine at position 9 (m1G9 and m1A9, respectively) in tRNAs; HSD17B10/MRPP2 acting as a non-catalytic subunit. The MRPP1-MRPP2 subcomplex also acts as a tRNA maturation platform: following 5'-end cleavage by the mitochondrial ribonuclease P complex, the MRPP1-MRPP2 subcomplex enhances the efficiency of 3'-processing catalyzed by ELAC2, retains the tRNA product after ELAC2 processing and presents the nascent tRNA to the mitochondrial CCA tRNA nucleotidyltransferase TRNT1 enzyme. Associates with mitochondrial DNA complexes at the nucleoids to initiate RNA processing and ribosome assembly. The protein is 3-hydroxyacyl-CoA dehydrogenase type-2 (HSD17B10) of Bos taurus (Bovine).